Consider the following 190-residue polypeptide: Large ribosomal subunit protein bL25 (190 aa).

This sequence belongs to the bacterial ribosomal protein bL25 family. CTC subfamily. Part of the 50S ribosomal subunit; part of the 5S rRNA/L5/L18/L25 subcomplex. Contacts the 5S rRNA. Binds to the 5S rRNA independently of L5 and L18.

Functionally, this is one of the proteins that binds to the 5S RNA in the ribosome where it forms part of the central protuberance. The sequence is that of Large ribosomal subunit protein bL25 from Neisseria gonorrhoeae (strain ATCC 700825 / FA 1090).